Reading from the N-terminus, the 205-residue chain is Protein PYRAB00100 (205 aa).

Residues 7-201 form the AMMECR1 domain; that stretch reads EWGEFLVRLA…EEYPRGPVRR (195 aa).

The polypeptide is Protein PYRAB00100 (Pyrococcus abyssi (strain GE5 / Orsay)).